The sequence spans 71 residues: Small ribosomal subunit protein bS21 (71 aa).

Belongs to the bacterial ribosomal protein bS21 family.

In Shewanella sediminis (strain HAW-EB3), this protein is Small ribosomal subunit protein bS21.